The following is a 127-amino-acid chain: Large ribosomal subunit protein bL17 (127 aa).

It belongs to the bacterial ribosomal protein bL17 family. In terms of assembly, part of the 50S ribosomal subunit. Contacts protein L32.

The polypeptide is Large ribosomal subunit protein bL17 (Haemophilus ducreyi (strain 35000HP / ATCC 700724)).